We begin with the raw amino-acid sequence, 354 residues long: Guanine nucleotide-binding protein alpha-16 subunit (354 aa).

G2 is lipidated: N-myristoyl glycine. The S-palmitoyl cysteine moiety is linked to residue C3. In terms of domain architecture, G-alpha spans 31–354 (KTVKLLLLGA…RDNLRTCGLY (324 aa)). The segment at 34-47 (KLLLLGAGESGKST) is G1 motif. Residues 39-46 (GAGESGKS), 174-180 (LRTRIKT), 199-203 (DVGGQ), 268-271 (NKKD), and A326 each bind GTP. Mg(2+) contacts are provided by S46 and T180. Positions 172–180 (DVLRTRIKT) are G2 motif. A G3 motif region spans residues 195-204 (FVVFDVGGQR). The segment at 264 to 271 (ILFLNKKD) is G4 motif. The interval 324–329 (TCATDT) is G5 motif.

Belongs to the G-alpha family. As to quaternary structure, g proteins are composed of 3 units; alpha, beta and gamma. The alpha chain contains the guanine nucleotide binding site.

In terms of biological role, guanine nucleotide-binding proteins (G proteins) are involved as modulators or transducers in various transmembrane signaling systems. In the 1-cell embryo, probably together with goa-1, controls nuclear rotation and spindle elongation during mitosis. During the first embryonic cell divisons, plays a role in gpr-1/2 cortical localization and in the proper orientation of EMS blastomere mitotic spindle. The sequence is that of Guanine nucleotide-binding protein alpha-16 subunit (gpa-16) from Caenorhabditis briggsae.